The chain runs to 345 residues: MVGIVGYGAYVPSYRIKVEEIAKVWGDDPVALSRGLVVNEKSVPSADEDTATIAVTAARYALARAQIDPQKIGAIYVGSESHPYAVKPSATIVAEAINATPDLTAADLEFACKAGTAGIQMTMGLVDSDMIEYGLAIGADTSQGAPGDALEYTASAGGAAYIIGKDNTLADIEETYSFTTDTPDFYRREGQDYPSHGGRFTGEPAYFKHVLSAAKGLFEKTDSKPEDYDYACFHQPNGKFYLRAGKKLGFTSEQIKQGLLTPNIGNTYSGAVPLALSNILDVAEPGDKIFVVSYGSGAGSDGFTLTVNEEIKEKRDLAPKTQDIIDRKQYVDYAVYAKFKGKIKM.

Asp-28 serves as a coordination point for (3S)-3-hydroxy-3-methylglutaryl-CoA. Glu-80 (proton donor/acceptor) is an active-site residue. Residues Cys-112 and Thr-153 each contribute to the (3S)-3-hydroxy-3-methylglutaryl-CoA site. The Acyl-thioester intermediate role is filled by Cys-112. A CoA-binding site is contributed by Arg-199. (3S)-3-hydroxy-3-methylglutaryl-CoA-binding residues include Thr-201 and His-234. His-234 functions as the Proton donor/acceptor in the catalytic mechanism. CoA is bound at residue Lys-239. Residues Arg-243, Asn-266, and Ser-296 each contribute to the (3S)-3-hydroxy-3-methylglutaryl-CoA site.

Belongs to the thiolase-like superfamily. Archaeal HMG-CoA synthase family. As to quaternary structure, interacts with acetoacetyl-CoA thiolase that catalyzes the precedent step in the pathway and with a DUF35 protein. The acetoacetyl-CoA thiolase/HMG-CoA synthase complex channels the intermediate via a fused CoA-binding site, which allows for efficient coupling of the endergonic thiolase reaction with the exergonic HMGCS reaction.

It carries out the reaction acetoacetyl-CoA + acetyl-CoA + H2O = (3S)-3-hydroxy-3-methylglutaryl-CoA + CoA + H(+). It functions in the pathway metabolic intermediate biosynthesis; (R)-mevalonate biosynthesis; (R)-mevalonate from acetyl-CoA: step 2/3. Catalyzes the condensation of acetyl-CoA with acetoacetyl-CoA to form 3-hydroxy-3-methylglutaryl-CoA (HMG-CoA). Functions in the mevalonate (MVA) pathway leading to isopentenyl diphosphate (IPP), a key precursor for the biosynthesis of isoprenoid compounds that are building blocks of archaeal membrane lipids. The sequence is that of Hydroxymethylglutaryl-CoA synthase from Methanobrevibacter smithii (strain ATCC 35061 / DSM 861 / OCM 144 / PS).